Consider the following 173-residue polypeptide: Nicotinamide-nucleotide adenylyltransferase (173 aa).

This sequence belongs to the archaeal NMN adenylyltransferase family.

It is found in the cytoplasm. The catalysed reaction is beta-nicotinamide D-ribonucleotide + ATP + H(+) = diphosphate + NAD(+). The protein operates within cofactor biosynthesis; NAD(+) biosynthesis; NAD(+) from nicotinamide D-ribonucleotide: step 1/1. The sequence is that of Nicotinamide-nucleotide adenylyltransferase from Methanosarcina mazei (strain ATCC BAA-159 / DSM 3647 / Goe1 / Go1 / JCM 11833 / OCM 88) (Methanosarcina frisia).